We begin with the raw amino-acid sequence, 368 residues long: Microtubule-associated protein Jupiter (368 aa).

A Phosphoserine modification is found at S30. T41 bears the Phosphothreonine mark. Residues 81–93 are compositionally biased toward basic and acidic residues; the sequence is RRGQKSVDSHSRL. Positions 81–106 are disordered; it reads RRGQKSVDSHSRLFGEPSRPITPGKN. T102 is subject to Phosphothreonine. Phosphoserine occurs at positions 111, 146, and 157. Low complexity-rich tracts occupy residues 129–157 and 238–248; these read NGNT…VSSS and GRYGYSSQSRR. 3 disordered regions span residues 129–164, 196–256, and 316–368; these read NGNT…LKIN, SQGN…SPLN, and KPKK…SGLW. Residues 337 to 354 are compositionally biased toward polar residues; that stretch reads GSDSAQTPTMNGANQVIN.

The protein belongs to the MAP Jupiter family.

Its subcellular location is the nucleus. The protein resides in the cytoplasm. The protein localises to the cytoskeleton. It is found in the spindle. Functionally, binds to all microtubule populations. The polypeptide is Microtubule-associated protein Jupiter (Drosophila willistoni (Fruit fly)).